Consider the following 38-residue polypeptide: Photosystem II reaction center protein L (38 aa).

The chain crosses the membrane as a helical span at residues 17 to 37; that stretch reads SLYWGLLLIFVLAVLFSNYSF.

The protein belongs to the PsbL family. In terms of assembly, PSII is composed of 1 copy each of membrane proteins PsbA, PsbB, PsbC, PsbD, PsbE, PsbF, PsbH, PsbI, PsbJ, PsbK, PsbL, PsbM, PsbT, PsbX, PsbY, PsbZ, Psb30/Ycf12, at least 3 peripheral proteins of the oxygen-evolving complex and a large number of cofactors. It forms dimeric complexes.

Its subcellular location is the plastid. It is found in the chloroplast thylakoid membrane. Its function is as follows. One of the components of the core complex of photosystem II (PSII). PSII is a light-driven water:plastoquinone oxidoreductase that uses light energy to abstract electrons from H(2)O, generating O(2) and a proton gradient subsequently used for ATP formation. It consists of a core antenna complex that captures photons, and an electron transfer chain that converts photonic excitation into a charge separation. This subunit is found at the monomer-monomer interface and is required for correct PSII assembly and/or dimerization. This is Photosystem II reaction center protein L from Bowenia serrulata (Byfield fern).